Reading from the N-terminus, the 384-residue chain is Lipid-A-disaccharide synthase (384 aa).

This sequence belongs to the LpxB family.

The enzyme catalyses 2-N,3-O-bis[(3R)-3-hydroxytetradecanoyl]-alpha-D-glucosaminyl 1-phosphate + UDP-2-N,3-O-bis[(3R)-3-hydroxytetradecanoyl]-alpha-D-glucosamine = lipid A disaccharide (E. coli) + UDP + H(+). It catalyses the reaction a lipid X + a UDP-2-N,3-O-bis[(3R)-3-hydroxyacyl]-alpha-D-glucosamine = a lipid A disaccharide + UDP + H(+). Its pathway is glycolipid biosynthesis; lipid IV(A) biosynthesis; lipid IV(A) from (3R)-3-hydroxytetradecanoyl-[acyl-carrier-protein] and UDP-N-acetyl-alpha-D-glucosamine: step 5/6. Its function is as follows. Condensation of UDP-2,3-diacylglucosamine and 2,3-diacylglucosamine-1-phosphate to form lipid A disaccharide, a precursor of lipid A, a phosphorylated glycolipid that anchors the lipopolysaccharide to the outer membrane of the cell. This chain is Lipid-A-disaccharide synthase, found in Blochmanniella floridana.